Reading from the N-terminus, the 129-residue chain is Small ribosomal subunit protein uS11 (129 aa).

This sequence belongs to the universal ribosomal protein uS11 family. Part of the 30S ribosomal subunit. Interacts with proteins S7 and S18. Binds to IF-3.

Its function is as follows. Located on the platform of the 30S subunit, it bridges several disparate RNA helices of the 16S rRNA. Forms part of the Shine-Dalgarno cleft in the 70S ribosome. This chain is Small ribosomal subunit protein uS11, found in Erythrobacter litoralis (strain HTCC2594).